A 167-amino-acid polypeptide reads, in one-letter code: Protein tyrosine phosphatase type IVA 2 (167 aa).

The 154-residue stretch at 5–158 (APVEISYENM…YRPKMRLRFR (154 aa)) folds into the Tyrosine-protein phosphatase domain. Cys-46 and Cys-101 form a disulfide bridge. Residue Asp-69 is the Proton donor of the active site. Cys-101 functions as the Phosphocysteine intermediate in the catalytic mechanism. A phosphate-binding site is contributed by 102-107 (VAGLGR). Arg-107 provides a ligand contact to substrate. Cys-164 bears the Cysteine methyl ester mark. Cys-164 carries S-farnesyl cysteine lipidation. The propeptide at 165–167 (CVQ) is removed in mature form.

It belongs to the protein-tyrosine phosphatase family. As to quaternary structure, in contrast to PTP4A1 and PTP4A3, does not interact with tubulin. Interacts with RABGGTB. In terms of processing, farnesylated. Farnesylation is required for membrane targeting and for interaction with RABGGTB. Expressed in skeletal muscle, and at lower levels in liver, lung, heart, kidney, brain, testis and spleen.

It localises to the cell membrane. Its subcellular location is the early endosome. The protein resides in the cytoplasm. The enzyme catalyses O-phospho-L-tyrosyl-[protein] + H2O = L-tyrosyl-[protein] + phosphate. With respect to regulation, inhibited by sodium orthovanadate and pentamidine. Protein tyrosine phosphatase which stimulates progression from G1 into S phase during mitosis. Inhibits geranylgeranyl transferase type II activity by blocking the association between RABGGTA and RABGGTB. This chain is Protein tyrosine phosphatase type IVA 2 (Ptp4a2), found in Mus musculus (Mouse).